The chain runs to 107 residues: CRISPR-associated endoribonuclease Cas2 (107 aa).

Asp6 lines the Mg(2+) pocket.

Belongs to the CRISPR-associated endoribonuclease Cas2 protein family. In terms of assembly, homodimer, forms a heterotetramer with a Cas1 homodimer. The cofactor is Mg(2+).

CRISPR (clustered regularly interspaced short palindromic repeat), is an adaptive immune system that provides protection against mobile genetic elements (viruses, transposable elements and conjugative plasmids). CRISPR clusters contain sequences complementary to antecedent mobile elements and target invading nucleic acids. CRISPR clusters are transcribed and processed into CRISPR RNA (crRNA). Functions as a ssRNA-specific endoribonuclease. Involved in the integration of spacer DNA into the CRISPR cassette. In Streptococcus mutans serotype c (strain NN2025), this protein is CRISPR-associated endoribonuclease Cas2.